We begin with the raw amino-acid sequence, 196 residues long: Sulfur-rich protein (196 aa).

Transmembrane regions (helical) follow at residues valine 34–tryptophan 54, isoleucine 76–phenylalanine 96, and phenylalanine 105–phenylalanine 125.

It localises to the membrane. The chain is Sulfur-rich protein (srp) from Chlamydia pneumoniae (Chlamydophila pneumoniae).